Reading from the N-terminus, the 115-residue chain is Holo-[acyl-carrier-protein] synthase (115 aa).

Mg(2+) is bound by residues D8 and E56.

The protein belongs to the P-Pant transferase superfamily. AcpS family. Mg(2+) serves as cofactor.

It is found in the cytoplasm. It catalyses the reaction apo-[ACP] + CoA = holo-[ACP] + adenosine 3',5'-bisphosphate + H(+). In terms of biological role, transfers the 4'-phosphopantetheine moiety from coenzyme A to a Ser of acyl-carrier-protein. The sequence is that of Holo-[acyl-carrier-protein] synthase from Ureaplasma parvum serovar 3 (strain ATCC 27815 / 27 / NCTC 11736).